The sequence spans 117 residues: uncharacterized protein (117 aa).

An N-terminal signal peptide occupies residues 1–38; sequence MIIDSSRIPSFTQLHSTMTRAPLLLLCVALVLLGHVNG.

The protein localises to the secreted. This is an uncharacterized protein from Homo sapiens (Human).